Reading from the N-terminus, the 523-residue chain is 2-oxopropyl-CoM reductase, carboxylating (523 aa).

53–54 (AA) contacts FAD. Arg56 lines the 2-oxopropyl-coenzyme M pocket. Position 81 (Ser81) interacts with FAD. Residue Cys82 participates in 2-oxopropyl-coenzyme M binding. A disulfide bridge links Cys82 with Cys87. Ala158 is an FAD binding site. Residues 222–225 (GSKT) and 245–246 (RT) each bind NADP(+). FAD is bound at residue Asp353. Glu360 lines the NADP(+) pocket. An FAD-binding site is contributed by Met361. Position 365 (Arg365) interacts with 2-oxopropyl-coenzyme M. Position 501 (Phe501) interacts with FAD.

This sequence belongs to the class-I pyridine nucleotide-disulfide oxidoreductase family. Homodimer. Component II of the aliphatic epoxide carboxylation complex together with components I, III and IV. FAD is required as a cofactor.

The enzyme catalyses coenzyme M + acetoacetate + NADP(+) = 2-oxopropyl-coenzyme M + CO2 + NADPH. Its pathway is alkene metabolism; propylene degradation. Its activity is regulated as follows. Inhibited (at 40%) by the coenzyme M analog 2-bromoethanesulfonate (BES). BES is a time-dependent inactivator of dithiothreitol-reduced 2-KPCC, where the redox active cysteines are in the free thiol forms. BES does not inactivate air-oxidized 2-KPCC, where the redox active cysteine pair is in the disulfide form. BES specifically alkylates the interchange thiol that facilitates thioether bond cleavage and enolacetone formation during catalysis. Involved in aliphatic epoxide carboxylation. Catalyzes the reductive cleavage of the thioether bond of 2-oxopropyl-coenzyme M (2-KPC), and the subsequent carboxylation of the ketopropyl cleavage product, yielding the products acetoacetate and free coenzyme M. The sequence is that of 2-oxopropyl-CoM reductase, carboxylating from Xanthobacter autotrophicus (strain ATCC BAA-1158 / Py2).